The chain runs to 264 residues: Thymidylate synthase (264 aa).

Residue arginine 21 coordinates dUMP. Histidine 51 contacts (6R)-5,10-methylene-5,6,7,8-tetrahydrofolate. 126 to 127 (RR) contributes to the dUMP binding site. Cysteine 146 (nucleophile) is an active-site residue. Residues 166 to 169 (RSAD), asparagine 177, and 207 to 209 (HLY) each bind dUMP. Aspartate 169 lines the (6R)-5,10-methylene-5,6,7,8-tetrahydrofolate pocket. Serine 263 contacts (6R)-5,10-methylene-5,6,7,8-tetrahydrofolate.

The protein belongs to the thymidylate synthase family. Bacterial-type ThyA subfamily. Homodimer.

It is found in the cytoplasm. The enzyme catalyses dUMP + (6R)-5,10-methylene-5,6,7,8-tetrahydrofolate = 7,8-dihydrofolate + dTMP. It participates in pyrimidine metabolism; dTTP biosynthesis. In terms of biological role, catalyzes the reductive methylation of 2'-deoxyuridine-5'-monophosphate (dUMP) to 2'-deoxythymidine-5'-monophosphate (dTMP) while utilizing 5,10-methylenetetrahydrofolate (mTHF) as the methyl donor and reductant in the reaction, yielding dihydrofolate (DHF) as a by-product. This enzymatic reaction provides an intracellular de novo source of dTMP, an essential precursor for DNA biosynthesis. This Neisseria meningitidis serogroup B (strain ATCC BAA-335 / MC58) protein is Thymidylate synthase.